Here is a 650-residue protein sequence, read N- to C-terminus: Sodium-dependent phosphate transporter 2 (650 aa).

The Extracellular segment spans residues 1–5 (MAMDG). Residues 6–26 (YLWMVILGFIIAFILAFSVGA) traverse the membrane as a helical segment. The Cytoplasmic portion of the chain corresponds to 27–46 (NDVANSFGTAVGSGVVTLRQ). A helical transmembrane segment spans residues 47 to 67 (ACILASIFETTGSVLLGAKVG). At 68–83 (ETIRKGIIDVNLYNDT) the chain is on the extracellular side. N-linked (GlcNAc...) asparagine glycosylation is present at Asn81. Residues 84 to 104 (VVTLMAGEVSAMVGSAVWQLI) traverse the membrane as a helical segment. Over 105–109 (ASFLR) the chain is Cytoplasmic. The helical transmembrane segment at 110–130 (LPISGTHCIVGSTIGFSLVAN) threads the bilayer. Over 131–142 (GTKGVQWMELVK) the chain is Extracellular. The chain crosses the membrane as a helical span at residues 143–163 (IVASWFISPLLSGFMSGVLFV). Topologically, residues 164–192 (LIRMFILTKEDPVPNGLQALPLFYAATIA) are cytoplasmic. Residues 193–212 (INVFSIMYTGAPVLGLSLPI) form a helical membrane-spanning segment. A topological domain (extracellular) is located at residue Trp213. A helical transmembrane segment spans residues 214-234 (AIALISFGVALLFAFFVWLFV). The Cytoplasmic segment spans residues 235–482 (CPWMRRKIAG…EEKEEKDTAE (248 aa)). Phosphoserine occurs at positions 253, 256, 259, 268, 315, and 384. The tract at residues 268–310 (SPFKELPGAKASDDSAVPLTNPTGEAVGPSEGTSTGNHPRTAY) is disordered. Residues 483 to 503 (VHLLFHFLQVLTACFGSFAHG) form a helical membrane-spanning segment. At 504 to 530 (GNDVSNAIGPLVALWLIYEQGGVMQEA) the chain is on the extracellular side. A helical membrane pass occupies residues 531 to 551 (ATPVWLLFYGGVGICTGLWVW). Topologically, residues 552–571 (GRRVIQTMGKDLTPITPSSG) are cytoplasmic. The chain crosses the membrane as a helical span at residues 572–586 (FTIELASAFTVVIAS). Topologically, residues 587–593 (NIGLPVS) are extracellular. Residues 594–609 (TTHCKVGSVVAVGWIR) traverse the membrane as a helical segment. The Cytoplasmic portion of the chain corresponds to 610–621 (SRKAVDWHLFRN). A helical transmembrane segment spans residues 622–642 (IFVAWFVTVPVAGLFSAAIMA). The Extracellular segment spans residues 643 to 650 (IFMYGILS).

The protein belongs to the inorganic phosphate transporter (PiT) (TC 2.A.20) family. In terms of assembly, homodimer.

The protein resides in the cell membrane. The protein localises to the apical cell membrane. The catalysed reaction is 2 Na(+)(out) + phosphate(out) = 2 Na(+)(in) + phosphate(in). In terms of biological role, sodium-phosphate symporter which preferentially transports the monovalent form of phosphate with a stoichiometry of two sodium ions per phosphate ion. Plays a critical role in the determination of bone quality and strength by providing phosphate for bone mineralization. Required to maintain normal cerebrospinal fluid phosphate levels. Mediates phosphate-induced calcification of vascular smooth muscle cells (VCMCs) and can functionally compensate for loss of SLC20A1 in VCMCs. Functionally, (Microbial infection) Functions as a retroviral receptor and confers hamster cells susceptibility to infection to Gibbon Ape Leukemia Virus (GaLV) and amphotropic murine leukemia virus (A-MuLV). The sequence is that of Sodium-dependent phosphate transporter 2 (SLC20A2) from Cricetulus griseus (Chinese hamster).